The sequence spans 457 residues: Siroheme synthase 2 (457 aa).

The interval 1-204 is precorrin-2 dehydrogenase /sirohydrochlorin ferrochelatase; that stretch reads MDHLPIFCQL…DDRQAVADTT (204 aa). NAD(+)-binding positions include 22–23 and 43–44; these read DV and LD. Residue serine 128 is modified to Phosphoserine. Positions 216-457 are uroporphyrinogen-III C-methyltransferase; that stretch reads GEVVLVGAGP…RDKLNWFSNH (242 aa). Proline 225 lines the S-adenosyl-L-methionine pocket. Aspartate 248 serves as the catalytic Proton acceptor. Lysine 270 acts as the Proton donor in catalysis. S-adenosyl-L-methionine contacts are provided by residues 301–303, isoleucine 306, 331–332, methionine 382, and glycine 411; these read GGD and TA.

It in the N-terminal section; belongs to the precorrin-2 dehydrogenase / sirohydrochlorin ferrochelatase family. In the C-terminal section; belongs to the precorrin methyltransferase family.

It carries out the reaction uroporphyrinogen III + 2 S-adenosyl-L-methionine = precorrin-2 + 2 S-adenosyl-L-homocysteine + H(+). The catalysed reaction is precorrin-2 + NAD(+) = sirohydrochlorin + NADH + 2 H(+). It catalyses the reaction siroheme + 2 H(+) = sirohydrochlorin + Fe(2+). The protein operates within cofactor biosynthesis; adenosylcobalamin biosynthesis; precorrin-2 from uroporphyrinogen III: step 1/1. It participates in cofactor biosynthesis; adenosylcobalamin biosynthesis; sirohydrochlorin from precorrin-2: step 1/1. It functions in the pathway porphyrin-containing compound metabolism; siroheme biosynthesis; precorrin-2 from uroporphyrinogen III: step 1/1. Its pathway is porphyrin-containing compound metabolism; siroheme biosynthesis; siroheme from sirohydrochlorin: step 1/1. The protein operates within porphyrin-containing compound metabolism; siroheme biosynthesis; sirohydrochlorin from precorrin-2: step 1/1. Its function is as follows. Multifunctional enzyme that catalyzes the SAM-dependent methylations of uroporphyrinogen III at position C-2 and C-7 to form precorrin-2 via precorrin-1. Then it catalyzes the NAD-dependent ring dehydrogenation of precorrin-2 to yield sirohydrochlorin. Finally, it catalyzes the ferrochelation of sirohydrochlorin to yield siroheme. This chain is Siroheme synthase 2, found in Klebsiella pneumoniae subsp. pneumoniae (strain ATCC 700721 / MGH 78578).